A 189-amino-acid chain; its full sequence is MDTEYEQVNKPWNELYKETTLGNKLTVNVGMEDQEVPLLPSNFLTKVRVGLSGGYITMRRIRIKIIPLVSRKAGVSGKLYLRDISDTTGRKLHCTESLDLGQEIRLTMQHLDFSVSTRSDVPIVFGFEELVSPFLEGRELFSISVRWQFGLSKNCYSLPQSKWKVMYQEDALKVLKPSKKKASKTDSSV.

The protein belongs to the tombusvirus/aureusvirus movement protein p22 family. Interacts with host protein HFI22. Phosphorylated.

The protein localises to the host membrane. Its function is as follows. Cell-to-cell movement. Displays RNA-binding activity. In Capsicum annuum (Capsicum pepper), this protein is Movement protein p22.